The chain runs to 518 residues: Type II methyltransferase M.HindII (518 aa).

This sequence belongs to the N(4)/N(6)-methyltransferase family.

The enzyme catalyses a 2'-deoxyadenosine in DNA + S-adenosyl-L-methionine = an N(6)-methyl-2'-deoxyadenosine in DNA + S-adenosyl-L-homocysteine + H(+). Its function is as follows. A gamma subtype methylase, recognizes the double-stranded sequence 5'-GTYRAC-3', methylates A-5 on both strands, and protects the DNA from cleavage by the HindII endonuclease. In Haemophilus influenzae (strain ATCC 51907 / DSM 11121 / KW20 / Rd), this protein is Type II methyltransferase M.HindII (hindIIM).